Reading from the N-terminus, the 227-residue chain is Cytochrome c oxidase subunit 2 (227 aa).

The Mitochondrial intermembrane portion of the chain corresponds to 1–14 (MAYPFQLGLQDATS). A helical membrane pass occupies residues 15–45 (PIMEELTNFHDHTLMIVFLISSLVLYIISLM). Residues 46 to 59 (LTTKLTHTSTMDAQ) are Mitochondrial matrix-facing. A helical transmembrane segment spans residues 60-87 (EVETIWTILPAVILILIALPSLRILYMM). The Mitochondrial intermembrane portion of the chain corresponds to 88-227 (DEINNPVLTV…HFENWSTSMI (140 aa)). His161, Cys196, Glu198, Cys200, His204, and Met207 together coordinate Cu cation. Residue Glu198 participates in Mg(2+) binding.

Belongs to the cytochrome c oxidase subunit 2 family. Component of the cytochrome c oxidase (complex IV, CIV), a multisubunit enzyme composed of 14 subunits. The complex is composed of a catalytic core of 3 subunits MT-CO1, MT-CO2 and MT-CO3, encoded in the mitochondrial DNA, and 11 supernumerary subunits COX4I, COX5A, COX5B, COX6A, COX6B, COX6C, COX7A, COX7B, COX7C, COX8 and NDUFA4, which are encoded in the nuclear genome. The complex exists as a monomer or a dimer and forms supercomplexes (SCs) in the inner mitochondrial membrane with NADH-ubiquinone oxidoreductase (complex I, CI) and ubiquinol-cytochrome c oxidoreductase (cytochrome b-c1 complex, complex III, CIII), resulting in different assemblies (supercomplex SCI(1)III(2)IV(1) and megacomplex MCI(2)III(2)IV(2)). Found in a complex with TMEM177, COA6, COX18, COX20, SCO1 and SCO2. Interacts with TMEM177 in a COX20-dependent manner. Interacts with COX20. Interacts with COX16. It depends on Cu cation as a cofactor.

It localises to the mitochondrion inner membrane. It carries out the reaction 4 Fe(II)-[cytochrome c] + O2 + 8 H(+)(in) = 4 Fe(III)-[cytochrome c] + 2 H2O + 4 H(+)(out). Its function is as follows. Component of the cytochrome c oxidase, the last enzyme in the mitochondrial electron transport chain which drives oxidative phosphorylation. The respiratory chain contains 3 multisubunit complexes succinate dehydrogenase (complex II, CII), ubiquinol-cytochrome c oxidoreductase (cytochrome b-c1 complex, complex III, CIII) and cytochrome c oxidase (complex IV, CIV), that cooperate to transfer electrons derived from NADH and succinate to molecular oxygen, creating an electrochemical gradient over the inner membrane that drives transmembrane transport and the ATP synthase. Cytochrome c oxidase is the component of the respiratory chain that catalyzes the reduction of oxygen to water. Electrons originating from reduced cytochrome c in the intermembrane space (IMS) are transferred via the dinuclear copper A center (CU(A)) of subunit 2 and heme A of subunit 1 to the active site in subunit 1, a binuclear center (BNC) formed by heme A3 and copper B (CU(B)). The BNC reduces molecular oxygen to 2 water molecules using 4 electrons from cytochrome c in the IMS and 4 protons from the mitochondrial matrix. This is Cytochrome c oxidase subunit 2 (MT-CO2) from Praomys taitae (Taita hill rat).